The sequence spans 90 residues: Acylphosphatase (90 aa).

Positions 3 to 90 (AIEVDVFGLV…FETNDFAIRG (88 aa)) constitute an Acylphosphatase-like domain. Residues R18 and N36 contribute to the active site.

It belongs to the acylphosphatase family.

It carries out the reaction an acyl phosphate + H2O = a carboxylate + phosphate + H(+). The chain is Acylphosphatase (acyP) from Leuconostoc mesenteroides subsp. mesenteroides (strain ATCC 8293 / DSM 20343 / BCRC 11652 / CCM 1803 / JCM 6124 / NCDO 523 / NBRC 100496 / NCIMB 8023 / NCTC 12954 / NRRL B-1118 / 37Y).